We begin with the raw amino-acid sequence, 140 residues long: MRHGKAGRKLNRTASHRKAMFANMAASLITHEQIVTTLPKAKEIRPIVEKLVTLGKRGDLHARRQAISQIRDAAVVSKLFDTIATRYATRNGGYLRIMKAGFRQGDNAAMAVIEFVDRDTYAKGAADKARVAAEEQAVAA.

Belongs to the bacterial ribosomal protein bL17 family. Part of the 50S ribosomal subunit. Contacts protein L32.

This is Large ribosomal subunit protein bL17 from Rhizobium etli (strain ATCC 51251 / DSM 11541 / JCM 21823 / NBRC 15573 / CFN 42).